A 192-amino-acid polypeptide reads, in one-letter code: Pyridoxal 5'-phosphate synthase subunit PdxT (192 aa).

46–48 contacts L-glutamine; it reads GES. The active-site Nucleophile is cysteine 78. L-glutamine is bound by residues arginine 106 and 135–136; that span reads IR. Residues histidine 171 and glutamate 173 each act as charge relay system in the active site.

This sequence belongs to the glutaminase PdxT/SNO family. As to quaternary structure, in the presence of PdxS, forms a dodecamer of heterodimers. Only shows activity in the heterodimer.

The catalysed reaction is aldehydo-D-ribose 5-phosphate + D-glyceraldehyde 3-phosphate + L-glutamine = pyridoxal 5'-phosphate + L-glutamate + phosphate + 3 H2O + H(+). It catalyses the reaction L-glutamine + H2O = L-glutamate + NH4(+). Its pathway is cofactor biosynthesis; pyridoxal 5'-phosphate biosynthesis. In terms of biological role, catalyzes the hydrolysis of glutamine to glutamate and ammonia as part of the biosynthesis of pyridoxal 5'-phosphate. The resulting ammonia molecule is channeled to the active site of PdxS. The polypeptide is Pyridoxal 5'-phosphate synthase subunit PdxT (Kosmotoga olearia (strain ATCC BAA-1733 / DSM 21960 / TBF 19.5.1)).